Reading from the N-terminus, the 430-residue chain is Serine--tRNA ligase (430 aa).

236–238 is a binding site for L-serine; sequence TAE. An ATP-binding site is contributed by 267 to 269; it reads RSE. Glu290 provides a ligand contact to L-serine. Residue 354-357 participates in ATP binding; the sequence is EISS. Ser390 contacts L-serine.

This sequence belongs to the class-II aminoacyl-tRNA synthetase family. Type-1 seryl-tRNA synthetase subfamily. Homodimer. The tRNA molecule binds across the dimer.

It localises to the cytoplasm. The enzyme catalyses tRNA(Ser) + L-serine + ATP = L-seryl-tRNA(Ser) + AMP + diphosphate + H(+). It carries out the reaction tRNA(Sec) + L-serine + ATP = L-seryl-tRNA(Sec) + AMP + diphosphate + H(+). It participates in aminoacyl-tRNA biosynthesis; selenocysteinyl-tRNA(Sec) biosynthesis; L-seryl-tRNA(Sec) from L-serine and tRNA(Sec): step 1/1. Catalyzes the attachment of serine to tRNA(Ser). Is also able to aminoacylate tRNA(Sec) with serine, to form the misacylated tRNA L-seryl-tRNA(Sec), which will be further converted into selenocysteinyl-tRNA(Sec). The sequence is that of Serine--tRNA ligase from Mannheimia succiniciproducens (strain KCTC 0769BP / MBEL55E).